Reading from the N-terminus, the 423-residue chain is Glutamyl-tRNA(Gln) amidotransferase subunit A (423 aa).

Active-site charge relay system residues include K28 and S103. The active-site Acyl-ester intermediate is the S127.

The protein belongs to the amidase family. GatA subfamily. Heterotrimer of A, B and C subunits.

The enzyme catalyses L-glutamyl-tRNA(Gln) + L-glutamine + ATP + H2O = L-glutaminyl-tRNA(Gln) + L-glutamate + ADP + phosphate + H(+). In terms of biological role, allows the formation of correctly charged Gln-tRNA(Gln) through the transamidation of misacylated Glu-tRNA(Gln) in organisms which lack glutaminyl-tRNA synthetase. The reaction takes place in the presence of glutamine and ATP through an activated gamma-phospho-Glu-tRNA(Gln). The chain is Glutamyl-tRNA(Gln) amidotransferase subunit A from Halobacterium salinarum (strain ATCC 700922 / JCM 11081 / NRC-1) (Halobacterium halobium).